Consider the following 204-residue polypeptide: Small ribosomal subunit protein uS7 (204 aa).

M1 is modified (N-acetylmethionine). T2 carries the post-translational modification N-acetylthreonine; in 40S ribosomal protein S5, N-terminally processed. T14 carries the phosphothreonine modification. K47 carries the N6-acetyllysine; alternate modification. Residue K47 forms a Glycyl lysine isopeptide (Lys-Gly) (interchain with G-Cter in SUMO2); alternate linkage. S142 carries the post-translational modification Phosphoserine.

It belongs to the universal ribosomal protein uS7 family. As to quaternary structure, component of the small ribosomal subunit. Part of the small subunit (SSU) processome, composed of more than 70 proteins and the RNA chaperone small nucleolar RNA (snoRNA) U3.

It localises to the cytoplasm. It is found in the nucleus. The protein resides in the nucleolus. In terms of biological role, component of the small ribosomal subunit. The ribosome is a large ribonucleoprotein complex responsible for the synthesis of proteins in the cell. Part of the small subunit (SSU) processome, first precursor of the small eukaryotic ribosomal subunit. During the assembly of the SSU processome in the nucleolus, many ribosome biogenesis factors, an RNA chaperone and ribosomal proteins associate with the nascent pre-rRNA and work in concert to generate RNA folding, modifications, rearrangements and cleavage as well as targeted degradation of pre-ribosomal RNA by the RNA exosome. This is Small ribosomal subunit protein uS7 (RPS5) from Bos taurus (Bovine).